The primary structure comprises 70 residues: Large ribosomal subunit protein bL31 (70 aa).

Zn(2+)-binding residues include Cys-16, Cys-18, Cys-37, and Cys-40.

This sequence belongs to the bacterial ribosomal protein bL31 family. Type A subfamily. As to quaternary structure, part of the 50S ribosomal subunit. The cofactor is Zn(2+).

Binds the 23S rRNA. The chain is Large ribosomal subunit protein bL31 from Alteromonas mediterranea (strain DSM 17117 / CIP 110805 / LMG 28347 / Deep ecotype).